A 21-amino-acid chain; its full sequence is CTCKDMTDKECLYFCHQDIIW.

Intrachain disulfides connect C1–C15 and C3–C11.

The protein belongs to the endothelin/sarafotoxin family. Expressed by the venom gland.

The protein resides in the secreted. Vasoconstrictor activity. These toxins cause cardiac arrest probably as a result of coronary vasospasm. May act by displaying agonistic activities towards endothelin-1 and -2 receptors (EDNRA and EDNRB). This is Sarafotoxin-D from Atractaspis engaddensis (Israeli burrowing asp).